Reading from the N-terminus, the 60-residue chain is Large ribosomal subunit protein eL37 (60 aa).

Positions 18, 21, 33, and 36 each coordinate Zn(2+). The segment at 18–36 (CRRCGKNSYHVRKKVCAAC) adopts a C4-type zinc-finger fold.

It belongs to the eukaryotic ribosomal protein eL37 family. It depends on Zn(2+) as a cofactor.

Binds to the 23S rRNA. This Methanothermobacter thermautotrophicus (strain ATCC 29096 / DSM 1053 / JCM 10044 / NBRC 100330 / Delta H) (Methanobacterium thermoautotrophicum) protein is Large ribosomal subunit protein eL37 (rpl37e).